Consider the following 88-residue polypeptide: GGDLEIGADVFTGNCAACHAGGANSVEPLKTLNKEDVTKYLDGGLSIEAITSQVRNGKGAMPAWSDRLDDEEIDGVVAYVFKNINEGW.

Residues cysteine 15, cysteine 18, histidine 19, and methionine 61 each contribute to the heme c site.

The protein belongs to the cytochrome c family. PetJ subfamily. Monomer. Binds 1 heme c group covalently per subunit.

It localises to the plastid. It is found in the chloroplast thylakoid lumen. In terms of biological role, functions as an electron carrier between membrane-bound cytochrome b6-f and photosystem I in oxygenic photosynthesis. The chain is Cytochrome c6 (petJ) from Bryopsis maxima (Green alga).